We begin with the raw amino-acid sequence, 548 residues long: Protoporphyrinogen oxidase, chloroplastic (548 aa).

The N-terminal 50 residues, 1-50 (MTTTPIANHPNIFTHQSSSSPLAFLNRTSFIPFSSISKRNSVNCNGWRTR), are a transit peptide targeting the chloroplast. FAD contacts are provided by residues 78 to 83 (GAGISG), 101 to 102 (EA), and 123 to 126 (GPNS). Residues 265–279 (KERSSTPKAPRDPRL) show a composition bias toward basic and acidic residues. Residues 265–287 (KERSSTPKAPRDPRLPKPKGQTV) are disordered. 522–524 (VAL) is an FAD binding site.

The protein belongs to the protoporphyrinogen/coproporphyrinogen oxidase family. Protoporphyrinogen oxidase subfamily. In terms of assembly, homodimer. FAD is required as a cofactor.

It localises to the plastid. Its subcellular location is the chloroplast. The catalysed reaction is protoporphyrinogen IX + 3 O2 = protoporphyrin IX + 3 H2O2. It participates in porphyrin-containing compound metabolism; protoporphyrin-IX biosynthesis; protoporphyrin-IX from protoporphyrinogen-IX: step 1/1. It functions in the pathway porphyrin-containing compound metabolism; chlorophyll biosynthesis. Its function is as follows. Catalyzes the 6-electron oxidation of protoporphyrinogen-IX to form protoporphyrin-IX. This Nicotiana tabacum (Common tobacco) protein is Protoporphyrinogen oxidase, chloroplastic (PPXI).